The sequence spans 357 residues: Uroporphyrinogen decarboxylase (357 aa).

Substrate-binding positions include 27–31 (RQAGR), aspartate 77, tyrosine 154, serine 209, and histidine 330.

The protein belongs to the uroporphyrinogen decarboxylase family. Homodimer.

Its subcellular location is the cytoplasm. The catalysed reaction is uroporphyrinogen III + 4 H(+) = coproporphyrinogen III + 4 CO2. Its pathway is porphyrin-containing compound metabolism; protoporphyrin-IX biosynthesis; coproporphyrinogen-III from 5-aminolevulinate: step 4/4. In terms of biological role, catalyzes the decarboxylation of four acetate groups of uroporphyrinogen-III to yield coproporphyrinogen-III. This Acinetobacter baumannii (strain AB0057) protein is Uroporphyrinogen decarboxylase.